We begin with the raw amino-acid sequence, 518 residues long: Phosphoacetylglucosamine mutase 1 (518 aa).

Position 49 is a phosphothreonine (Thr49). Ser51 acts as the Phosphoserine intermediate in catalysis. Mg(2+) contacts are provided by Ser51, Asp267, Asp269, and Asp271. Position 51 is a phosphoserine (Ser51). Substrate-binding positions include 360–362, 486–490, and Arg495; these read EAN and RASGT.

This sequence belongs to the phosphohexose mutase family. The cofactor is Mg(2+).

The protein resides in the cytoplasm. It localises to the nucleus. The enzyme catalyses N-acetyl-alpha-D-glucosamine 1-phosphate = N-acetyl-D-glucosamine 6-phosphate. It participates in nucleotide-sugar biosynthesis; UDP-N-acetyl-alpha-D-glucosamine biosynthesis; N-acetyl-alpha-D-glucosamine 1-phosphate from alpha-D-glucosamine 6-phosphate (route I): step 2/2. Catalyzes the conversion of GlcNAc-6-P into GlcNAc-1-P during the synthesis of uridine diphosphate/UDP-GlcNAc, which is a biosynthetic precursor of chitin and also supplies the amino sugars for N-linked oligosaccharides of glycoproteins. This is Phosphoacetylglucosamine mutase 1 from Schizosaccharomyces pombe (strain 972 / ATCC 24843) (Fission yeast).